Here is a 298-residue protein sequence, read N- to C-terminus: Large ribosomal subunit protein uL18 (298 aa).

It belongs to the universal ribosomal protein uL18 family. Component of the large ribosomal subunit. Mature ribosomes consist of a small (40S) and a large (60S) subunit. The 40S subunit contains about 32 different proteins and 1 molecule of RNA (18S). The 60S subunit contains 45 different proteins and 3 molecules of RNA (25S, 5.8S and 5S).

Its subcellular location is the cytoplasm. Functionally, component of the ribosome, a large ribonucleoprotein complex responsible for the synthesis of proteins in the cell. The small ribosomal subunit (SSU) binds messenger RNAs (mRNAs) and translates the encoded message by selecting cognate aminoacyl-transfer RNA (tRNA) molecules. The large subunit (LSU) contains the ribosomal catalytic site termed the peptidyl transferase center (PTC), which catalyzes the formation of peptide bonds, thereby polymerizing the amino acids delivered by tRNAs into a polypeptide chain. The nascent polypeptides leave the ribosome through a tunnel in the LSU and interact with protein factors that function in enzymatic processing, targeting, and the membrane insertion of nascent chains at the exit of the ribosomal tunnel. In Candida albicans (strain SC5314 / ATCC MYA-2876) (Yeast), this protein is Large ribosomal subunit protein uL18.